Consider the following 200-residue polypeptide: NADH-quinone oxidoreductase subunit C (200 aa).

It belongs to the complex I 30 kDa subunit family. In terms of assembly, NDH-1 is composed of 14 different subunits. Subunits NuoB, C, D, E, F, and G constitute the peripheral sector of the complex.

The protein resides in the cell inner membrane. The enzyme catalyses a quinone + NADH + 5 H(+)(in) = a quinol + NAD(+) + 4 H(+)(out). NDH-1 shuttles electrons from NADH, via FMN and iron-sulfur (Fe-S) centers, to quinones in the respiratory chain. The immediate electron acceptor for the enzyme in this species is believed to be ubiquinone. Couples the redox reaction to proton translocation (for every two electrons transferred, four hydrogen ions are translocated across the cytoplasmic membrane), and thus conserves the redox energy in a proton gradient. The protein is NADH-quinone oxidoreductase subunit C of Ralstonia pickettii (strain 12J).